The sequence spans 583 residues: 2-succinyl-5-enolpyruvyl-6-hydroxy-3-cyclohexene-1-carboxylate synthase (583 aa).

Belongs to the TPP enzyme family. MenD subfamily. As to quaternary structure, homodimer. Mg(2+) is required as a cofactor. Mn(2+) serves as cofactor. It depends on thiamine diphosphate as a cofactor.

It catalyses the reaction isochorismate + 2-oxoglutarate + H(+) = 5-enolpyruvoyl-6-hydroxy-2-succinyl-cyclohex-3-ene-1-carboxylate + CO2. Its pathway is quinol/quinone metabolism; 1,4-dihydroxy-2-naphthoate biosynthesis; 1,4-dihydroxy-2-naphthoate from chorismate: step 2/7. It participates in quinol/quinone metabolism; menaquinone biosynthesis. Its function is as follows. Catalyzes the thiamine diphosphate-dependent decarboxylation of 2-oxoglutarate and the subsequent addition of the resulting succinic semialdehyde-thiamine pyrophosphate anion to isochorismate to yield 2-succinyl-5-enolpyruvyl-6-hydroxy-3-cyclohexene-1-carboxylate (SEPHCHC). In Chlorobium luteolum (strain DSM 273 / BCRC 81028 / 2530) (Pelodictyon luteolum), this protein is 2-succinyl-5-enolpyruvyl-6-hydroxy-3-cyclohexene-1-carboxylate synthase.